A 308-amino-acid polypeptide reads, in one-letter code: Coenzyme PQQ synthesis protein B (308 aa).

This sequence belongs to the PqqB family.

Its pathway is cofactor biosynthesis; pyrroloquinoline quinone biosynthesis. May be involved in the transport of PQQ or its precursor to the periplasm. The chain is Coenzyme PQQ synthesis protein B from Rhodopseudomonas palustris (strain BisB5).